We begin with the raw amino-acid sequence, 693 residues long: CREB-regulated transcription coactivator 2 (693 aa).

A compositionally biased stretch (polar residues) spans 1–20 (MATSGANGPGSATASASNPR). The disordered stretch occupies residues 1–30 (MATSGANGPGSATASASNPRKFSEKIALQK). Residue Ala2 is modified to N-acetylalanine. Arg51 bears the Asymmetric dimethylarginine; by PRMT6 mark. 3 positions are modified to phosphoserine: Ser70, Ser86, and Ser90. 3 positions are modified to asymmetric dimethylarginine; by PRMT6: Arg99, Arg120, and Arg123. Ser136 is modified (phosphoserine). An asymmetric dimethylarginine; by PRMT6 mark is found at Arg161 and Arg168. Thr169 bears the Phosphothreonine mark. At Ser171 the chain carries Phosphoserine; by AMPK, MARK2, SIK1 and SIK2. A Phosphothreonine modification is found at Thr192. Lys234 participates in a covalent cross-link: Glycyl lysine isopeptide (Lys-Gly) (interchain with G-Cter in SUMO2). A Nuclear export signal motif is present at residues 271 to 287 (TGGSLPDLTNLHFPPPL). Phosphoserine; by MARK2 is present on Ser274. Disordered stretches follow at residues 282–306 (HFPP…GGNS) and 328–554 (GYDA…MSDF). 5 positions are modified to phosphoserine: Ser306, Ser368, Ser393, Ser433, and Ser456. Composition is skewed to low complexity over residues 331 to 378 (APGL…SSLA) and 386 to 415 (SLGH…GAPS). Polar residues predominate over residues 447–468 (SQQQLPKQFSPTMSPTLSSITQ). At Tyr488 the chain carries Phosphotyrosine. Ser489, Ser490, and Ser492 each carry phosphoserine. The segment covering 498–507 (QPHTPKSLQQ) has biased composition (polar residues). Thr501 is subject to Phosphothreonine. Over residues 509–529 (GLPSQSCSVQSSGGQPPGRQS) the composition is skewed to low complexity. 3 positions are modified to phosphoserine: Ser613, Ser623, and Ser624.

Belongs to the TORC family. In terms of assembly, binds, as a tetramer, through its N-terminal region, with the bZIP domain of CREB1. 'Arg-314' in the bZIP domain of CREB1 is essential for this interaction. Interaction, via its C-terminal, with TAF4, enhances recruitment of TAF4 to CREB1. Interacts with SIK2. Interacts with 14-3-3 proteins, YWHAB and YWHAG. Interacts (probably when phosphorylated at Ser-171) with YWHAE. Interacts with calmodulin-dependent catalytic subunit PPP3CA/calcineurin A. Interaction with COP1 mediates nuclear export and degradation of CRTC2. (Microbial infection) Interaction with the human T-cell leukemia virus type 1 (HTLV-1) Tax protein is essential for optimal transcription activation by Tax. Post-translationally, phosphorylation/dephosphorylation states of Ser-171 are required for regulating transduction of CREB activity. CRTCs/TORCs are inactive when phosphorylated, and active when dephosphorylated at this site. This primary site of phosphorylation, is regulated by cAMP and calcium levels and is dependent on the phosphorylation of SIKs (SIK1 and SIK2) by LKB1. Following adenylyl cyclase activation, dephosphorylated at Ser-171 by PPP3CA/calcineurin A resulting in CRTC2 dissociation from 14-3-3 proteins and PPP3CA. Both insulin and AMPK increase this phosphorylation of CRTC2 while glucagon suppresses it. Phosphorylation at Ser-274 by MARK2 is induced under low glucose conditions and dephosphorylated in response to glucose influx. Phosphorylation at Ser-274 promotes interaction with 14-3-3 proteins and translocation to the cytoplasm. In terms of processing, asymmetric dimethylation of arginine resisues by PRMT6 enhances the association of CRTC2 with CREB on the promoters of gluconeogenic genes. Most abundantly expressed in the thymus. Present in both B and T-lymphocytes. Highly expressed in HEK293T cells and in insulinomas. High levels also in spleen, ovary, muscle and lung, with highest levels in muscle. Lower levels found in brain, colon, heart, kidney, prostate, small intestine and stomach. Weak expression in liver and pancreas.

It is found in the cytoplasm. Its subcellular location is the nucleus. Functionally, transcriptional coactivator for CREB1 which activates transcription through both consensus and variant cAMP response element (CRE) sites. Acts as a coactivator, in the SIK/TORC signaling pathway, being active when dephosphorylated and acts independently of CREB1 'Ser-133' phosphorylation. Enhances the interaction of CREB1 with TAF4. Regulates gluconeogenesis as a component of the LKB1/AMPK/TORC2 signaling pathway. Regulates the expression of specific genes such as the steroidogenic gene, StAR. Potent coactivator of PPARGC1A and inducer of mitochondrial biogenesis in muscle cells. Also coactivator for TAX activation of the human T-cell leukemia virus type 1 (HTLV-1) long terminal repeats (LTR). The polypeptide is CREB-regulated transcription coactivator 2 (CRTC2) (Homo sapiens (Human)).